Reading from the N-terminus, the 490-residue chain is Aspartyl/glutamyl-tRNA(Asn/Gln) amidotransferase subunit B (490 aa).

This sequence belongs to the GatB/GatE family. GatB subfamily. As to quaternary structure, heterotrimer of A, B and C subunits.

The catalysed reaction is L-glutamyl-tRNA(Gln) + L-glutamine + ATP + H2O = L-glutaminyl-tRNA(Gln) + L-glutamate + ADP + phosphate + H(+). It carries out the reaction L-aspartyl-tRNA(Asn) + L-glutamine + ATP + H2O = L-asparaginyl-tRNA(Asn) + L-glutamate + ADP + phosphate + 2 H(+). In terms of biological role, allows the formation of correctly charged Asn-tRNA(Asn) or Gln-tRNA(Gln) through the transamidation of misacylated Asp-tRNA(Asn) or Glu-tRNA(Gln) in organisms which lack either or both of asparaginyl-tRNA or glutaminyl-tRNA synthetases. The reaction takes place in the presence of glutamine and ATP through an activated phospho-Asp-tRNA(Asn) or phospho-Glu-tRNA(Gln). The protein is Aspartyl/glutamyl-tRNA(Asn/Gln) amidotransferase subunit B of Burkholderia thailandensis (strain ATCC 700388 / DSM 13276 / CCUG 48851 / CIP 106301 / E264).